Reading from the N-terminus, the 100-residue chain is MKISEEEVRHVATLSKLAFSEEETSQFATTLTKIVDMVELLNEVDTEGVAITTTMADRKNVMRPDLAQAGTNREDLFKNVPEKENNFIKVPAILEDGGDA.

The protein belongs to the GatC family. In terms of assembly, heterotrimer of A, B and C subunits.

It carries out the reaction L-glutamyl-tRNA(Gln) + L-glutamine + ATP + H2O = L-glutaminyl-tRNA(Gln) + L-glutamate + ADP + phosphate + H(+). The enzyme catalyses L-aspartyl-tRNA(Asn) + L-glutamine + ATP + H2O = L-asparaginyl-tRNA(Asn) + L-glutamate + ADP + phosphate + 2 H(+). Functionally, allows the formation of correctly charged Asn-tRNA(Asn) or Gln-tRNA(Gln) through the transamidation of misacylated Asp-tRNA(Asn) or Glu-tRNA(Gln) in organisms which lack either or both of asparaginyl-tRNA or glutaminyl-tRNA synthetases. The reaction takes place in the presence of glutamine and ATP through an activated phospho-Asp-tRNA(Asn) or phospho-Glu-tRNA(Gln). The polypeptide is Aspartyl/glutamyl-tRNA(Asn/Gln) amidotransferase subunit C (Streptococcus uberis (strain ATCC BAA-854 / 0140J)).